A 186-amino-acid chain; its full sequence is Peptidyl-tRNA hydrolase (186 aa).

Residue tyrosine 13 participates in tRNA binding. The active-site Proton acceptor is histidine 18. 3 residues coordinate tRNA: tyrosine 59, asparagine 61, and asparagine 107.

It belongs to the PTH family. Monomer.

It is found in the cytoplasm. The enzyme catalyses an N-acyl-L-alpha-aminoacyl-tRNA + H2O = an N-acyl-L-amino acid + a tRNA + H(+). In terms of biological role, hydrolyzes ribosome-free peptidyl-tRNAs (with 1 or more amino acids incorporated), which drop off the ribosome during protein synthesis, or as a result of ribosome stalling. Catalyzes the release of premature peptidyl moieties from peptidyl-tRNA molecules trapped in stalled 50S ribosomal subunits, and thus maintains levels of free tRNAs and 50S ribosomes. This is Peptidyl-tRNA hydrolase from Thermotoga maritima (strain ATCC 43589 / DSM 3109 / JCM 10099 / NBRC 100826 / MSB8).